The primary structure comprises 311 residues: Metal-staphylopine import system permease protein CntB (311 aa).

Transmembrane regions (helical) follow at residues 9–29 (IALM…LTYI), 105–125 (LTII…VVSA), 139–159 (VAFF…IIYV), 173–193 (GPES…GIYF), 237–257 (IFCM…YIFA), and 274–294 (FPVI…FNTL). One can recognise an ABC transmembrane type-1 domain in the interval 99-295 (FMNTLKLTII…VLFIVFNTLA (197 aa)).

This sequence belongs to the binding-protein-dependent transport system permease family. The complex is composed of two ATP-binding proteins (CntD and CntF), two transmembrane proteins (CntB and CntC) and a solute-binding protein (CntA).

It localises to the cell membrane. Nickel/cobalt import is reduced in the presence of zinc. Functionally, part of the ABC transporter complex CntABCDF (Opp1) involved in the uptake of metal in complex with the metallophore staphylopine (StP). Involved in the import of divalent metals ions such as nickel, cobalt and zinc. Probably responsible for the translocation of the substrate across the membrane. Plays a major role in nickel/cobalt import in zinc-depleted conditions. Contributes to virulence. Required for full urease activity in vitro. The protein is Metal-staphylopine import system permease protein CntB of Staphylococcus aureus (strain NCTC 8325 / PS 47).